The chain runs to 240 residues: Aspartate/glutamate leucyltransferase (240 aa).

This sequence belongs to the R-transferase family. Bpt subfamily.

The protein localises to the cytoplasm. It catalyses the reaction N-terminal L-glutamyl-[protein] + L-leucyl-tRNA(Leu) = N-terminal L-leucyl-L-glutamyl-[protein] + tRNA(Leu) + H(+). The enzyme catalyses N-terminal L-aspartyl-[protein] + L-leucyl-tRNA(Leu) = N-terminal L-leucyl-L-aspartyl-[protein] + tRNA(Leu) + H(+). In terms of biological role, functions in the N-end rule pathway of protein degradation where it conjugates Leu from its aminoacyl-tRNA to the N-termini of proteins containing an N-terminal aspartate or glutamate. This chain is Aspartate/glutamate leucyltransferase, found in Gluconobacter oxydans (strain 621H) (Gluconobacter suboxydans).